The chain runs to 151 residues: Cytochrome c-type biogenesis protein CcmE (151 aa).

Residues 1 to 8 (MNPLRKKR) are Cytoplasmic-facing. A helical; Signal-anchor for type II membrane protein transmembrane segment spans residues 9 to 29 (LLIILAILVGVGIAVGLALSA). Residues 30–151 (LKENINLFYT…QSAPTPAKEG (122 aa)) are Periplasmic-facing. Residues H124 and Y128 each coordinate heme. Residues 131 to 151 (PEVTKALKDSGQSAPTPAKEG) form a disordered region.

Belongs to the CcmE/CycJ family.

It is found in the cell inner membrane. In terms of biological role, heme chaperone required for the biogenesis of c-type cytochromes. Transiently binds heme delivered by CcmC and transfers the heme to apo-cytochromes in a process facilitated by CcmF and CcmH. The sequence is that of Cytochrome c-type biogenesis protein CcmE from Pseudomonas fluorescens (strain ATCC BAA-477 / NRRL B-23932 / Pf-5).